A 2197-amino-acid chain; its full sequence is Protein sickie (2197 aa).

Positions 21–129 (RDYAEIYTDW…LFFALSRFKQ (109 aa)) constitute a Calponin-homology (CH) domain. Disordered stretches follow at residues 165 to 197 (GLRT…QLAQ), 235 to 311 (CPPD…PQKH), 331 to 646 (AASV…NKFH), 730 to 767 (GSSP…SPGK), 788 to 910 (RNSR…FGYV), 1094 to 1119 (GPGQ…NRSN), and 1202 to 1223 (TAAG…GLVG). The segment covering 175 to 197 (QDKNQQEQQQQQQQQQTPQQLAQ) has biased composition (low complexity). Over residues 261-290 (SDFNTSRPNSPPTSNHTIQSLKSGNNNSLR) the composition is skewed to polar residues. The segment covering 291-304 (PPSIKSGIPSPSSP) has biased composition (low complexity). The span at 331–341 (AASVASKTQIQ) shows a compositional bias: polar residues. Low complexity-rich tracts occupy residues 342 to 354 (SKRT…FSSA) and 379 to 398 (SVSS…LAAQ). Over residues 399-428 (QKKEQANKATKLDKKEKSPARSLNKEESGN) the composition is skewed to basic and acidic residues. Composition is skewed to polar residues over residues 429 to 441 (ESRS…TGKS), 561 to 570 (ANSQPTSHIS), 577 to 588 (EPSTPQHSSGIY), and 633 to 644 (SAPNTPTASPNK). 3 stretches are compositionally biased toward low complexity: residues 755 to 766 (GPSSSAGGISPG), 796 to 831 (SIGT…NNNN), and 887 to 904 (SSSK…KGVP). A compositionally biased stretch (polar residues) spans 1100–1119 (GQMSGNESPYVQSPRMNRSN). Positions 1262 to 1342 (YGNAEERQAH…RQTIELLRKQ (81 aa)) form a coiled coil. Disordered regions lie at residues 1373-1415 (QALG…SMCS) and 1455-1511 (KTSR…SPAK). Polar residues-rich tracts occupy residues 1379–1399 (GSDQ…NNGS) and 1406–1415 (RQHSTDSMCS). The span at 1455 to 1468 (KTSRHVGHHHHHNH) shows a compositional bias: basic residues. Residues 1556–1591 (SSASQLESLKEMMNKMRAEMMSLKHNNERLQKLVTT) adopt a coiled-coil conformation. Disordered stretches follow at residues 1600-1633 (SLGQ…PPME), 1648-1690 (CLPP…EAAP), and 2172-2197 (SEAQ…AGAE). Over residues 1603-1616 (QAISPNGSVAGSSE) the composition is skewed to polar residues. Pro residues predominate over residues 1650–1663 (PPAPAPEQPPPPAP). Polar residues predominate over residues 2184–2197 (LDSNVTPESSAGAE).

This sequence belongs to the Nav/unc-53 family.

In terms of biological role, required for the immune deficiency pathway, which mediates responses to Gram-negative bacterial infection. Favors Rel activation and nuclear translocation. In Drosophila melanogaster (Fruit fly), this protein is Protein sickie (sick).